Here is a 117-residue protein sequence, read N- to C-terminus: Mini-circle uncharacterized 12.9 kDa protein (117 aa).

The chain is Mini-circle uncharacterized 12.9 kDa protein from Streptomyces coelicolor (strain ATCC BAA-471 / A3(2) / M145).